Reading from the N-terminus, the 112-residue chain is Putative pterin-4-alpha-carbinolamine dehydratase (112 aa).

It belongs to the pterin-4-alpha-carbinolamine dehydratase family.

It carries out the reaction (4aS,6R)-4a-hydroxy-L-erythro-5,6,7,8-tetrahydrobiopterin = (6R)-L-erythro-6,7-dihydrobiopterin + H2O. This is Putative pterin-4-alpha-carbinolamine dehydratase from Shewanella woodyi (strain ATCC 51908 / MS32).